The chain runs to 135 residues: UPF0216 protein MTH_949 (135 aa).

Belongs to the UPF0216 family.

This chain is UPF0216 protein MTH_949, found in Methanothermobacter thermautotrophicus (strain ATCC 29096 / DSM 1053 / JCM 10044 / NBRC 100330 / Delta H) (Methanobacterium thermoautotrophicum).